The chain runs to 370 residues: Aminomethyltransferase (370 aa).

This sequence belongs to the GcvT family. In terms of assembly, the glycine cleavage system is composed of four proteins: P, T, L and H.

The enzyme catalyses N(6)-[(R)-S(8)-aminomethyldihydrolipoyl]-L-lysyl-[protein] + (6S)-5,6,7,8-tetrahydrofolate = N(6)-[(R)-dihydrolipoyl]-L-lysyl-[protein] + (6R)-5,10-methylene-5,6,7,8-tetrahydrofolate + NH4(+). The glycine cleavage system catalyzes the degradation of glycine. In Prochlorococcus marinus (strain MIT 9515), this protein is Aminomethyltransferase.